Here is a 312-residue protein sequence, read N- to C-terminus: 4-diphosphocytidyl-2-C-methyl-D-erythritol kinase (312 aa).

The active site involves K16. 101 to 111 is a binding site for ATP; the sequence is PIGAGLAGGSS. D143 is a catalytic residue.

This sequence belongs to the GHMP kinase family. IspE subfamily.

The enzyme catalyses 4-CDP-2-C-methyl-D-erythritol + ATP = 4-CDP-2-C-methyl-D-erythritol 2-phosphate + ADP + H(+). Its pathway is isoprenoid biosynthesis; isopentenyl diphosphate biosynthesis via DXP pathway; isopentenyl diphosphate from 1-deoxy-D-xylulose 5-phosphate: step 3/6. Its function is as follows. Catalyzes the phosphorylation of the position 2 hydroxy group of 4-diphosphocytidyl-2C-methyl-D-erythritol. The chain is 4-diphosphocytidyl-2-C-methyl-D-erythritol kinase from Prochlorococcus marinus subsp. pastoris (strain CCMP1986 / NIES-2087 / MED4).